Here is a 278-residue protein sequence, read N- to C-terminus: Elongation factor Ts 2, mitochondrial (278 aa).

It belongs to the EF-Ts family.

The protein resides in the mitochondrion. Associates with the EF-Tu.GDP complex and induces the exchange of GDP to GTP. It remains bound to the aminoacyl-tRNA.EF-Tu.GTP complex up to the GTP hydrolysis stage on the ribosome. The protein is Elongation factor Ts 2, mitochondrial of Trypanosoma cruzi (strain CL Brener).